Consider the following 320-residue polypeptide: Heterogeneous nuclear ribonucleoprotein A1 (320 aa).

M1 is subject to N-acetylmethionine. S2 is modified (N-acetylserine; in Heterogeneous nuclear ribonucleoprotein A1, N-terminally processed). The residue at position 2 (S2) is a Phosphoserine. K3 carries the N6-acetyllysine; alternate modification. Residue K3 forms a Glycyl lysine isopeptide (Lys-Gly) (interchain with G-Cter in SUMO2); alternate linkage. Residues S4 and S6 each carry the phosphoserine modification. Positions 4 to 94 (SESPKEPEQL…EPKRAVSRED (91 aa)) are globular A domain. A Glycyl lysine isopeptide (Lys-Gly) (interchain with G-Cter in SUMO2) cross-link involves residue K8. RRM domains follow at residues 14-97 (RKLF…DSQR) and 105-184 (KKIF…LCKQ). Residue S22 is modified to Phosphoserine. K78 is covalently cross-linked (Glycyl lysine isopeptide (Lys-Gly) (interchain with G-Cter in SUMO2)). The segment at 95 to 185 (SQRPGAHLTV…EVRKALCKQE (91 aa)) is globular B domain. K113 is covalently cross-linked (Glycyl lysine isopeptide (Lys-Gly) (interchain with G-Cter in SUMO)). Residues K179 and K183 each participate in a glycyl lysine isopeptide (Lys-Gly) (interchain with G-Cter in SUMO2) cross-link. A disordered region spans residues 188–216 (SASSSQRGRSGSGNFGGGRGGGFGGNDNF). S192 bears the Phosphoserine; by MKNK2 mark. At R194 the chain carries Asymmetric dimethylarginine; alternate. Residue R194 is modified to Dimethylated arginine; alternate. At R194 the chain carries Omega-N-methylarginine; alternate. Gly residues predominate over residues 197-216 (SGSGNFGGGRGGGFGGNDNF). At S199 the chain carries Phosphoserine. An asymmetric dimethylarginine; alternate mark is found at R206, R218, R225, and R232. R206 bears the Dimethylated arginine; alternate mark. Omega-N-methylarginine; alternate is present on residues R206, R218, R225, and R232. An RNA-binding RGG-box region spans residues 218 to 240 (RGGNFSGRGGFGGSRGGGGYGGS). R225 carries the post-translational modification Dimethylated arginine; alternate. Residues 268–305 (NQSSNFGPMKGGNFGGRSSGPYGGGGQYFAKPRNQGGY) are nuclear targeting sequence. The disordered stretch occupies residues 271-320 (SNFGPMKGGNFGGRSSGPYGGGGQYFAKPRNQGGYGGSSSSSSYGSGRRF). The span at 276–294 (MKGGNFGGRSSGPYGGGGQ) shows a compositional bias: gly residues. Residue R284 is modified to Omega-N-methylarginine. S285 carries the post-translational modification Phosphoserine. K298 is subject to N6-acetyllysine; alternate. K298 participates in a covalent cross-link: Glycyl lysine isopeptide (Lys-Gly) (interchain with G-Cter in SUMO2); alternate. R300 carries the post-translational modification Omega-N-methylarginine. Residues 308-320 (SSSSSSYGSGRRF) show a composition bias toward low complexity. S309 is subject to Phosphoserine. Phosphoserine; by MKNK2 is present on residues S310, S311, and S312. Phosphoserine occurs at positions 313 and 316. R318 is modified (omega-N-methylarginine).

In terms of assembly, identified in the spliceosome C complex. Identified in a IGF2BP1-dependent mRNP granule complex containing untranslated mRNAs. Interacts with SEPT6. Interacts with C9orf72. Interacts with KHDRBS1. Interacts with UBQLN2. Interacts with PPIA/CYPA. Sumoylated.

It localises to the nucleus. It is found in the cytoplasm. In terms of biological role, involved in the packaging of pre-mRNA into hnRNP particles, transport of poly(A) mRNA from the nucleus to the cytoplasm and modulation of splice site selection. Plays a role in the splicing of pyruvate kinase PKM by binding repressively to sequences flanking PKM exon 9, inhibiting exon 9 inclusion and resulting in exon 10 inclusion and production of the PKM M2 isoform. Binds to the IRES and thereby inhibits the translation of the apoptosis protease activating factor APAF1. May bind to specific miRNA hairpins. The protein is Heterogeneous nuclear ribonucleoprotein A1 (Hnrnpa1) of Rattus norvegicus (Rat).